Consider the following 149-residue polypeptide: Transthyretin (149 aa).

A signal peptide spans 1–20; the sequence is MAFHSLLLLCLAGLVFLSEA. C32 carries the sulfocysteine modification. K37 contributes to the L-thyroxine binding site. The residue at position 64 (E64) is a 4-carboxyglutamate. Residues E76 and S139 each contribute to the L-thyroxine site.

Belongs to the transthyretin family. In terms of assembly, homotetramer. Dimer of dimers. In the homotetramer, subunits assemble around a central channel that can accommodate two ligand molecules. Interacts with RBP4. In terms of processing, sulfonation of the reactive cysteine Cys-32 enhances the stability of the native conformation of TTR, avoiding misassembly of the protein leading to amyloid formation. Highly expressed in the choroid plexus.

It localises to the secreted. Thyroid hormone-binding protein. Probably transports thyroxine from the bloodstream to the brain. This Sminthopsis macroura (Stripe-faced dunnart) protein is Transthyretin (TTR).